We begin with the raw amino-acid sequence, 961 residues long: Probable exosome complex exonuclease RRP44 (961 aa).

A PINc domain is found at 73-188; that stretch reads HALIVDSTSL…LVFDEDSKKR (116 aa). The CSD1 domain occupies 232–338; it reads IFDEYLSHDR…DEENDDENDE (107 aa). The segment at 322–346 is disordered; it reads ADDMGNEDEENDDENDEPKAKKSKK. A compositionally biased stretch (acidic residues) spans 325 to 337; it reads MGNEDEENDDEND. The CSD2 domain occupies 381-447; the sequence is LFCPAERLIP…ENEVLLLEHD (67 aa). One can recognise an RNB domain in the interval 479–809; that stretch reads RVDLRDLTIC…IVHRLLAAAI (331 aa).

Belongs to the RNR ribonuclease family. Component of the RNA exosome complex. In terms of tissue distribution, ubiquitously expressed.

It is found in the nucleus. The protein localises to the nucleoplasm. In terms of biological role, putative catalytic component of the RNA exosome complex which has 3'-&gt;5' exoribonuclease activity and participates in a multitude of cellular RNA processing and degradation events. Has both 3'-5' exonuclease and endonuclease activities. Involved in regulation of antisense ribosomal siRNA production. The polypeptide is Probable exosome complex exonuclease RRP44 (dis-3) (Caenorhabditis elegans).